A 622-amino-acid chain; its full sequence is Probable ATP-dependent RNA helicase DDX41 (622 aa).

The span at 1 to 15 (MEDSEPERKRARADE) shows a compositional bias: basic and acidic residues. Disordered stretches follow at residues 1–39 (MEDSEPERKRARADEATAGGSRSEDEDEDDEDYVPYVPL) and 51–84 (LQRRRKGATEEEQQDSGSEPRGDEDDIPLGPQSN). Serine 4 is modified (phosphoserine). Position 9 is an N6-acetyllysine (lysine 9). Lysine 9 participates in a covalent cross-link: Glycyl lysine isopeptide (Lys-Gly) (interchain with G-Cter in ubiquitin). 2 positions are modified to phosphoserine: serine 21 and serine 23. Positions 24–33 (EDEDEDDEDY) are enriched in acidic residues. Tyrosine 33 bears the Phosphotyrosine mark. Residue lysine 115 forms a Glycyl lysine isopeptide (Lys-Gly) (interchain with G-Cter in ubiquitin) linkage. Positions 181-209 (KSFKEMKFPAAILRGLKKKGILHPTPIQI) match the Q motif motif. In terms of domain architecture, Helicase ATP-binding spans 212–396 (IPTILSGRDM…KSALVKPVTI (185 aa)). 225–232 (AFTGSGKT) lines the ATP pocket. A DEAD box motif is present at residues 344–347 (DEAD). In terms of domain architecture, Helicase C-terminal spans 407-567 (DVIQEVEYVK…KVPPVLQVLH (161 aa)). Tyrosine 414 is subject to Phosphotyrosine. Glycyl lysine isopeptide (Lys-Gly) (interchain with G-Cter in SUMO2) cross-links involve residues lysine 416 and lysine 442. A CCHC-type zinc finger spans residues 580 to 597 (RGCAFCGGLGHRITDCPK).

It belongs to the DEAD box helicase family. DDX41 subfamily. In terms of assembly, identified in the spliceosome C complex. Interacts with ERCC6. Interacts with FAM50A. Interacts with STING1. Interacts with CGAS. Interacts with several spliceosomes components such as PRP19 or CDC5L. Post-translationally, acetylation at Lys-9 regulates the nuclear/cytoplasmic localization. Phosphorylated by BTK; phosphorylation induces binding to dsDNA and STING1. In terms of processing, 'Lys-48'-linked ubiquitinated and degraded by TRIM21 leading to negative regulation of the innate immune response to intracellular dsDNA.

It is found in the nucleus. The protein resides in the cytoplasm. The enzyme catalyses ATP + H2O = ADP + phosphate + H(+). Multifunctional protein that participates in many aspects of cellular RNA metabolism. Plays pivotal roles in innate immune sensing and hematopoietic homeostasis. Recognizes foreign or self-nucleic acids generated during microbial infection, thereby initiating anti-pathogen responses. Mechanistically, phosphorylation by BTK allows binding to dsDNA leading to interaction with STING1. Modulates the homeostasis of dsDNA through its ATP-dependent DNA-unwinding activity and ATP-independent strand-annealing activity. In turn, induces STING1-mediated type I interferon and cytokine responses to DNA and DNA viruses. During murine leukemia virus infection, primarily senses the DNA/RNA hybrid generated at the first step of reverse transcription, while cGAS recognizes dsDNA generated at the next step and both are needed for the antiretroviral innate immune response. Selectively modulates the transcription of certain immunity-associated genes by regulating their alternative splicing. Binds to RNA (R)-loops, structures consisting of DNA/RNA hybrids and a displaced strand of DNA that occur during transcription, and prevents their accumulation, thereby maintaining genome stability. Also participates in pre-mRNA splicing, translational regulation and snoRNA processing, which is essential for ribosome biogenesis. The sequence is that of Probable ATP-dependent RNA helicase DDX41 (Ddx41) from Mus musculus (Mouse).